Reading from the N-terminus, the 341-residue chain is MLDERAKMLLKTLVERYIADGQPVGSRTLSKTSGLELSPATIRNVMSDLEELGLIASPHTSAGRIPTARGYRLFVDSMLTSRAFAREVADTGSAPLLQPDQPKRVIANAAQLLSSLSQFVGVVTVPKKPSVFRHMEFLRLGERRVLLILVSPDGDVQNRVLFTAHDYTQSQLVEATNYLNAHYAGLSIEGVRERLKLEVDALRGEIGTLMQAAVQAGTEAVNEDTEQLIVSGERNLLGVQDFGSDMGSIRKMFDLFEQKTQLLRLLDGSSRADGVRIYIGGESGVVPIEELSVVSAPYEVDGQVVGTLGVIGPTRMAYERMIQIVDITSRLVGNALSQKQG.

This sequence belongs to the HrcA family.

Negative regulator of class I heat shock genes (grpE-dnaK-dnaJ and groELS operons). Prevents heat-shock induction of these operons. The sequence is that of Heat-inducible transcription repressor HrcA from Leptothrix cholodnii (strain ATCC 51168 / LMG 8142 / SP-6) (Leptothrix discophora (strain SP-6)).